We begin with the raw amino-acid sequence, 364 residues long: Dihydroorotate dehydrogenase (quinone) (364 aa).

FMN is bound by residues 61 to 65 and Thr85; that span reads AGYDK. Lys65 provides a ligand contact to substrate. 110 to 114 lines the substrate pocket; sequence NRLGF. FMN is bound by residues Asn139 and Asn170. A substrate-binding site is contributed by Asn170. The active-site Nucleophile is the Ser173. Residue Asn175 coordinates substrate. FMN is bound by residues Lys215 and Ser243. Residue 244 to 245 coordinates substrate; that stretch reads NT. Residues Gly266, Gly295, and 316 to 317 contribute to the FMN site; that span reads YT.

This sequence belongs to the dihydroorotate dehydrogenase family. Type 2 subfamily. As to quaternary structure, monomer. Requires FMN as cofactor.

The protein localises to the cell membrane. The enzyme catalyses (S)-dihydroorotate + a quinone = orotate + a quinol. Its pathway is pyrimidine metabolism; UMP biosynthesis via de novo pathway; orotate from (S)-dihydroorotate (quinone route): step 1/1. In terms of biological role, catalyzes the conversion of dihydroorotate to orotate with quinone as electron acceptor. This is Dihydroorotate dehydrogenase (quinone) from Brucella abortus (strain S19).